The primary structure comprises 255 residues: Thiazole synthase (255 aa).

Residue Lys-96 is the Schiff-base intermediate with DXP of the active site. Residues Gly-157, 183–184 (AG), and 205–206 (NT) contribute to the 1-deoxy-D-xylulose 5-phosphate site.

It belongs to the ThiG family. Homotetramer. Forms heterodimers with either ThiH or ThiS.

It is found in the cytoplasm. It carries out the reaction [ThiS sulfur-carrier protein]-C-terminal-Gly-aminoethanethioate + 2-iminoacetate + 1-deoxy-D-xylulose 5-phosphate = [ThiS sulfur-carrier protein]-C-terminal Gly-Gly + 2-[(2R,5Z)-2-carboxy-4-methylthiazol-5(2H)-ylidene]ethyl phosphate + 2 H2O + H(+). It participates in cofactor biosynthesis; thiamine diphosphate biosynthesis. Functionally, catalyzes the rearrangement of 1-deoxy-D-xylulose 5-phosphate (DXP) to produce the thiazole phosphate moiety of thiamine. Sulfur is provided by the thiocarboxylate moiety of the carrier protein ThiS. In vitro, sulfur can be provided by H(2)S. This chain is Thiazole synthase, found in Staphylococcus haemolyticus (strain JCSC1435).